The sequence spans 651 residues: Probable inactive purple acid phosphatase 9 (651 aa).

The first 20 residues, 1-20 (MIAAVYTLFFFFLLISSVYS), serve as a signal peptide directing secretion. N-linked (GlcNAc...) asparagine glycans are attached at residues asparagine 32, asparagine 96, and asparagine 202. Fe cation is bound by residues aspartate 305 and tyrosine 308. A Zn(2+)-binding site is contributed by aspartate 305. Residue asparagine 338 coordinates Zn(2+). Asparagine 338 lines the substrate pocket. Asparagine 378 and asparagine 432 each carry an N-linked (GlcNAc...) asparagine glycan. Histidine 444 contacts Zn(2+). N-linked (GlcNAc...) asparagine glycosylation is present at asparagine 475. Histidine 483 contributes to the Zn(2+) binding site. 483 to 485 (HVH) contacts substrate. Histidine 485 contributes to the Fe cation binding site. Residues asparagine 495 and asparagine 640 are each glycosylated (N-linked (GlcNAc...) asparagine).

It belongs to the metallophosphoesterase superfamily. Purple acid phosphatase family. Homodimer. The cofactor is Fe cation. Zn(2+) serves as cofactor. In terms of tissue distribution, expressed in roots, stems, leaves, flowers and siliques.

Its subcellular location is the secreted. The protein is Probable inactive purple acid phosphatase 9 (PAP9) of Arabidopsis thaliana (Mouse-ear cress).